Reading from the N-terminus, the 164-residue chain is Crossover junction endodeoxyribonuclease RuvC (164 aa).

Catalysis depends on residues D7, E67, and D139. Positions 7, 67, and 139 each coordinate Mg(2+).

The protein belongs to the RuvC family. As to quaternary structure, homodimer which binds Holliday junction (HJ) DNA. The HJ becomes 2-fold symmetrical on binding to RuvC with unstacked arms; it has a different conformation from HJ DNA in complex with RuvA. In the full resolvosome a probable DNA-RuvA(4)-RuvB(12)-RuvC(2) complex forms which resolves the HJ. Requires Mg(2+) as cofactor.

It localises to the cytoplasm. It catalyses the reaction Endonucleolytic cleavage at a junction such as a reciprocal single-stranded crossover between two homologous DNA duplexes (Holliday junction).. Its function is as follows. The RuvA-RuvB-RuvC complex processes Holliday junction (HJ) DNA during genetic recombination and DNA repair. Endonuclease that resolves HJ intermediates. Cleaves cruciform DNA by making single-stranded nicks across the HJ at symmetrical positions within the homologous arms, yielding a 5'-phosphate and a 3'-hydroxyl group; requires a central core of homology in the junction. The consensus cleavage sequence is 5'-(A/T)TT(C/G)-3'. Cleavage occurs on the 3'-side of the TT dinucleotide at the point of strand exchange. HJ branch migration catalyzed by RuvA-RuvB allows RuvC to scan DNA until it finds its consensus sequence, where it cleaves and resolves the cruciform DNA. The polypeptide is Crossover junction endodeoxyribonuclease RuvC (Citrifermentans bemidjiense (strain ATCC BAA-1014 / DSM 16622 / JCM 12645 / Bem) (Geobacter bemidjiensis)).